The following is a 295-amino-acid chain: Bifunctional protein FolD (295 aa).

Residues 166–168 (GRS), serine 191, and isoleucine 232 contribute to the NADP(+) site.

Belongs to the tetrahydrofolate dehydrogenase/cyclohydrolase family. As to quaternary structure, homodimer.

It carries out the reaction (6R)-5,10-methylene-5,6,7,8-tetrahydrofolate + NADP(+) = (6R)-5,10-methenyltetrahydrofolate + NADPH. It catalyses the reaction (6R)-5,10-methenyltetrahydrofolate + H2O = (6R)-10-formyltetrahydrofolate + H(+). Its pathway is one-carbon metabolism; tetrahydrofolate interconversion. Its function is as follows. Catalyzes the oxidation of 5,10-methylenetetrahydrofolate to 5,10-methenyltetrahydrofolate and then the hydrolysis of 5,10-methenyltetrahydrofolate to 10-formyltetrahydrofolate. In Rhodopseudomonas palustris (strain ATCC BAA-98 / CGA009), this protein is Bifunctional protein FolD.